Consider the following 327-residue polypeptide: Malate dehydrogenase (327 aa).

Gly-11–Ser-17 is a binding site for NAD(+). Substrate is bound by residues Arg-92 and Arg-98. NAD(+) contacts are provided by residues Asn-105, Gln-112, and Val-129–Asn-131. Substrate-binding residues include Asn-131 and Arg-162. The active-site Proton acceptor is His-187.

Belongs to the LDH/MDH superfamily. MDH type 2 family.

The catalysed reaction is (S)-malate + NAD(+) = oxaloacetate + NADH + H(+). Catalyzes the reversible oxidation of malate to oxaloacetate. The chain is Malate dehydrogenase from Cellvibrio japonicus (strain Ueda107) (Pseudomonas fluorescens subsp. cellulosa).